We begin with the raw amino-acid sequence, 231 residues long: Uracil phosphoribosyltransferase (231 aa).

38–42 contacts GTP; it reads KGLVR. 5-phospho-alpha-D-ribose 1-diphosphate contacts are provided by residues R87, R112, and 140-148; that span reads DPMIATGST. Residues I203 and 208 to 210 each bind uracil; that span reads GDA. Residue D209 coordinates 5-phospho-alpha-D-ribose 1-diphosphate.

The protein belongs to the UPRTase family. Mg(2+) is required as a cofactor.

The enzyme catalyses UMP + diphosphate = 5-phospho-alpha-D-ribose 1-diphosphate + uracil. Its pathway is pyrimidine metabolism; UMP biosynthesis via salvage pathway; UMP from uracil: step 1/1. With respect to regulation, allosterically activated by GTP. Its function is as follows. Catalyzes the conversion of uracil and 5-phospho-alpha-D-ribose 1-diphosphate (PRPP) to UMP and diphosphate. The protein is Uracil phosphoribosyltransferase of Methanococcus maripaludis (strain C7 / ATCC BAA-1331).